An 853-amino-acid polypeptide reads, in one-letter code: uncharacterized protein (853 aa).

Basic residues predominate over residues 1 to 11 (MAPRKKAVTKK). 3 disordered regions span residues 1 to 448 (MAPR…SNNV), 485 to 621 (IAPT…NYFN), and 635 to 658 (ENYK…NEDE). The span at 20–37 (IEEEIIEEPVDEIVESDG) shows a compositional bias: acidic residues. The span at 42–55 (NKKKGKRKSSKKSK) shows a compositional bias: basic residues. The segment covering 60-74 (ENVEEEEQDQEEEEE) has biased composition (acidic residues). Residues 75–87 (GNKKQKEENDADK) show a composition bias toward basic and acidic residues. Positions 88 to 107 (KSRKHDEHRKKRDSKNRRSH) are enriched in basic residues. The span at 112 to 121 (ENEEGEEDDE) shows a compositional bias: acidic residues. A compositionally biased stretch (basic residues) spans 124 to 139 (RKKRRRRKHREKRKKN). Composition is skewed to acidic residues over residues 143–166 (EEEE…EEDV) and 179–197 (DFDE…EEEQ). Over residues 216-228 (DKSKKRKSKKKKR) the composition is skewed to basic residues. Composition is skewed to acidic residues over residues 232-260 (DDDD…EDVN) and 268-286 (KEEE…DEEK). Composition is skewed to basic and acidic residues over residues 287–361 (QSEN…RDHY), 370–400 (SRDH…RDHY), and 411–425 (RSRD…DEKS). Composition is skewed to low complexity over residues 426–447 (SSSN…SSNN), 510–613 (NNDN…SNSS), and 636–652 (NYKN…NNNK).

This is an uncharacterized protein from Dictyostelium discoideum (Social amoeba).